We begin with the raw amino-acid sequence, 613 residues long: MAATAVAAAVAGTESAQGPPGPAASLELWLNKATDPSMSEQDWSAIQNFCEQVNTDPNGPTHAPWLLAHKIQSPQEKEALYALTVLEMCMNHCGEKFHSEVAKFRFLNELIKVLSPKYLGSWATGKVKGRVIEILFSWTVWFPEDIKIRDAYQMLKKQGIIKQDPKLPVDKILPPPSPWPKSSIFDADEEKSKLLTRLLKSNHPEDLQAANRLIKNLVKEEQEKSEKVSKRVSAVEEVRSHVKVLQEMLSMYRRPGQAPPDQEALQVVYERCEKLRPTLFRLASDTTDDDDALAEILQANDLLTQGVLLYKQVMEGRVTFGNRVTSSLGDIPVSRVFQNPAGCMKTCPLIDLEVDNGPAQMGTVVPSLLHQDLAALGISDAPVTGMVSGQNCCEEKRNPSSSTLPGGGVQNPSADRNLLDLLSAQPAPCPLNYVSQKSVPKEVPPGTKSSPGWSWEAGPLAPSPSSQNTPLAQVFVPLESVKPSSLPPLIVYDRNGFRILLHFSQTGAPGHPEVQVLLLTMMSTAPQPVWDIMFQVAVPKSMRVKLQPASSSKLPAFSPLMPPAVISQMLLLDNPHKEPIRLRYKLTFNQGGQPFSEVGEVKDFPDLAVLGAA.

One can recognise a VHS domain in the interval 33–163 (ATDPSMSEQD…MLKKQGIIKQ (131 aa)). The 128-residue stretch at 188–315 (DEEKSKLLTR…GVLLYKQVME (128 aa)) folds into the GAT domain. Residues 316-483 (GRVTFGNRVT…VFVPLESVKP (168 aa)) are unstructured hinge. Disordered stretches follow at residues 389 to 414 (GQNC…NPSA) and 435 to 466 (SQKS…SPSS). Over residues 399-414 (PSSSTLPGGGVQNPSA) the composition is skewed to polar residues. Phosphoserine is present on S400. The region spanning 484–605 (SSLPPLIVYD…SEVGEVKDFP (122 aa)) is the GAE domain.

It belongs to the GGA protein family. In terms of assembly, monomer. Interacts with NECAP1, TSG101, UBC and AFTPH/aftiphilin. Interacts with CNST. Interacts with GGA1 and GGA3. Binds to clathrin and activated ARFs, such as ARF1, ARF5 and ARF6. Binds RABEP1 and RABGEF1. Interacts with the type-I membrane proteins LRP3, M6PR/CD-MPR, IGF2R/CI-MPR and BACE1. Interacts (via N-terminal VHS domain) with SORL1/sorLA and SORT1 (via C-terminal cytosolic domain). Binds the accessory proteins CCDC91, P200, SYNRG, EPN4 and NECAP2. Interacts with ADRA2B. Interacts (via VHS domain) with PIK4B; the interaction is important for PIK4B location at the Golgi apparatus membrane. In terms of processing, ubiquitinated. As to expression, ubiquitously expressed.

It localises to the golgi apparatus. The protein resides in the trans-Golgi network membrane. It is found in the endosome membrane. The protein localises to the early endosome membrane. Plays a role in protein sorting and trafficking between the trans-Golgi network (TGN) and endosomes. Mediates the ARF-dependent recruitment of clathrin to the TGN and binds ubiquitinated proteins and membrane cargo molecules with a cytosolic acidic cluster-dileucine (DXXLL) motif. Mediates export of the GPCR receptor ADRA2B to the cell surface. Regulates retrograde transport of phosphorylated form of BACE1 from endosomes to the trans-Golgi network. In Homo sapiens (Human), this protein is ADP-ribosylation factor-binding protein GGA2 (GGA2).